A 217-amino-acid polypeptide reads, in one-letter code: MTLVLNQTEQLTSGLKAMGVKLAEVQQAKILRYLELLHKWNKAYNLTAVRDPVLHVSRHILDSLAALPYLKGVQFLDVGAGAGLPGIPLSIALPESHWTLLDSNGKKTRFMDQCRMDMGLPNLRVEHTRIEAFSPDVKFDGIISRAFATIGDMIAGCRDLILSETRIYALKGLYPHDEIEAMPADFEVVEWHKLEVPGCDGERHLLIIARSGNTGGS.

S-adenosyl-L-methionine-binding positions include Gly79, Leu84, 130–131 (IE), and Arg145.

It belongs to the methyltransferase superfamily. RNA methyltransferase RsmG family.

It localises to the cytoplasm. The catalysed reaction is guanosine(527) in 16S rRNA + S-adenosyl-L-methionine = N(7)-methylguanosine(527) in 16S rRNA + S-adenosyl-L-homocysteine. In terms of biological role, specifically methylates the N7 position of guanine in position 527 of 16S rRNA. The sequence is that of Ribosomal RNA small subunit methyltransferase G from Hahella chejuensis (strain KCTC 2396).